The following is an 853-amino-acid chain: Transforming growth factor beta receptor type 3 (853 aa).

A signal peptide spans 1-23 (MAVTSHHMIPVMVVLMSACLATA). Residues 24–789 (GPEPSTRCEL…IFHGLDTLTV (766 aa)) are Extracellular-facing. Residues N37, N144, and N493 are each glycosylated (N-linked (GlcNAc...) asparagine). An intrachain disulfide couples C55 to C200. A ZP domain is found at 456-730 (KCDHEKMVVA…PRCVTPDDAC (275 aa)). The tract at residues 530–559 (SPGDSSGWPDGYEDLESGDNGFPGDGDEGE) is disordered. S535 and S546 each carry an O-linked (Xyl...) (glycosaminoglycan) serine glycan. N572, N591, and N698 each carry an N-linked (GlcNAc...) asparagine glycan. 3 cysteine pairs are disulfide-bonded: C640-C706, C661-C730, and C711-C723. The tract at residues 737–751 (MIWTMMQNKKTFTKP) is interaction with TGF-beta ligand. The helical transmembrane segment at 790–811 (MGIAFAAFVIGALLTGALWYIY) threads the bilayer. At 812–853 (SHTGETARRQQVPTSPPASENSSAAHSIGSTQSTPCSSSSTA) the chain is on the cytoplasmic side. The span at 820-836 (RQQVPTSPPASENSSAA) shows a compositional bias: polar residues. The tract at residues 820–853 (RQQVPTSPPASENSSAAHSIGSTQSTPCSSSSTA) is disordered. Positions 838 to 853 (SIGSTQSTPCSSSSTA) are enriched in low complexity. Residue T842 is modified to Phosphothreonine.

In terms of assembly, forms homodimers and homooligomers. Interacts with DYNLT4. Interacts with integrin ITGA5:ITGB1; this interaction promotes the internalization and trafficking of ITGA5:ITGB1 into endocytic vesicles. Interacts with TGFB1, BMP2, BMP5, BMP7 or GDF5 and inhibin A via the ligand binding domains. Interacts with ALK3/BMPR1A; this interaction results in the cell surface retention of BMPR1A. Interacts with ALK6/BMPR1B; this interaction enhances BMPR1B-mediated stimulation of the BMP signaling pathway. Interacts with the scaffolding protein beta-arrestin2/ARRB2; this interaction mediates internalization of TGFBR3 and thus regulates migration, actin cytoskeleton and activation of CDC42. Extensively modified by glycosaminoglycan groups (GAG). Post-translationally, phosphorylated in the cytoplasmic domain by the type II receptor TGFBR2 at THR-842 to mediate recruitment of ARRB2 and subsequent internalization of TGFBR2 and TGFBR3.

It localises to the cell membrane. It is found in the secreted. The protein resides in the extracellular space. The protein localises to the extracellular matrix. Its function is as follows. Cell surface receptor that regulates diverse cellular processes including cell proliferation, differentiation, migration, and apoptosis. Initiates BMP, inhibin, and TGF-beta signaling pathways by interacting with different ligands including TGFB1, BMP2, BMP5, BMP7 or GDF5. Alternatively, acts as a cell surface coreceptor for BMP ligands, serving to enhance ligand binding by differentially regulating BMPR1A/ALK3 and BMPR1B/ALK6 receptor trafficking. Promotes epithelial cell adhesion, focal adhesion formation and integrin signaling during epithelial cell spreading on fibronectin. By interacting with the scaffolding protein beta-arrestin2/ARRB2, regulates migration or actin cytoskeleton and promotes the activation of CDC42 as well as the inhibition of NF-kappa-B. In gonadotrope cells, acts as an inhibin A coreceptor and regulates follicle-stimulating hormone (FSH) levels and female fertility. Plays a role in the inhibition of directed and random cell migration in epithelial cells by altering the actin cytoskeletal organization. Participates in epithelial-mesenchymal transformation (EMT) upon binding to BMP2 or TGFB2, by activating the PAR6/SMURF1/RHOA pathway. This Rattus norvegicus (Rat) protein is Transforming growth factor beta receptor type 3 (Tgfbr3).